The primary structure comprises 444 residues: D(2) dopamine receptor (444 aa).

Topologically, residues 1-37 (MDPLNLSWYDDDLERQNWSRPFNGSEGKADRPHYNYY) are extracellular. N-linked (GlcNAc...) asparagine glycans are attached at residues Asn-5, Asn-17, and Asn-23. The chain crosses the membrane as a helical span at residues 38–60 (AMLLTLLIFIIVFGNVLVCMAVS). At 61–70 (REKALQTTTN) the chain is on the cytoplasmic side. The helical transmembrane segment at 71–93 (YLIVSLAVADLLVATLVMPWVVY) threads the bilayer. The Extracellular portion of the chain corresponds to 94–108 (LEVVGEWKFSRIHCD). Cys-107 and Cys-182 are oxidised to a cystine. A helical transmembrane segment spans residues 109–130 (IFVTLDVMMCTASILNLCAISI). The Cytoplasmic segment spans residues 131 to 151 (DRYTAVAMPMLYNTRYSSKRR). A helical membrane pass occupies residues 152–172 (VTVMIAIVWVLSFTISCPLLF). At 173 to 188 (GLNNTDQNECIIANPA) the chain is on the extracellular side. A helical transmembrane segment spans residues 189–213 (FVVYSSIVSFYVPFIVTLLVYIKIY). Residues 211–374 (KIYIVLRKRR…SQQKEKKATQ (164 aa)) form an interaction with PPP1R9B region. The Cytoplasmic portion of the chain corresponds to 214 to 374 (IVLRKRRKRV…SQQKEKKATQ (161 aa)). A disordered region spans residues 282 to 329 (EMLSSTSPPERTRYSPIPPSHHQLTLPDPSHHGLHSNPDSPAKPEKNG). A helical membrane pass occupies residues 375-396 (MLAIVLGVFIICWLPFFITHIL). Residues 397-410 (NIHCDCNIPPVLYS) are Extracellular-facing. Cys-400 and Cys-402 form a disulfide bridge. The helical transmembrane segment at 411 to 432 (AFTWLGYVNSAVNPIIYTTFNI) threads the bilayer. Topologically, residues 433-444 (EFRKAFMKILHC) are cytoplasmic. Cys-444 carries the S-palmitoyl cysteine lipid modification.

This sequence belongs to the G-protein coupled receptor 1 family. In terms of assembly, forms homo- and heterooligomers with DRD4. The interaction with DRD4 may modulate agonist-induced downstream signaling. Interacts with CADPS and CADPS2. Interacts with GPRASP1, PPP1R9B and CLIC6. Interacts with ARRB2. Interacts with HTR2A. Interacts with DRD1. Interacts with KCNA2. Palmitoylated. Palmitoylation which is required for proper localization to the plasma membrane and stability of the receptor could be carried on by ZDHHC4, ZDHHC3 and ZDHHC8. Expressed in the anterior lobe of the pituitary gland. Expressed ventral tegmental area of the midbrain and the pars compacta of the substantia nigra. Expressed seven times more than isoform short in the caudate nucleus. As to expression, expressed in the anterior lobe of the pituitary gland. Expressed in the caudate nucleus. Not expressed in the wider brain.

It is found in the cell membrane. The protein localises to the golgi apparatus membrane. Dopamine receptor whose activity is mediated by G proteins which inhibit adenylyl cyclase. Positively regulates postnatal regression of retinal hyaloid vessels via suppression of VEGFR2/KDR activity, downstream of OPN5. In Rattus norvegicus (Rat), this protein is D(2) dopamine receptor (Drd2).